The chain runs to 90 residues: MSRTVFCRKYQKELEGLAMPPMPGPKGQDIYENVSKLAWEEWQNQQTMLINEKHLNLMDVNNRKYLQAQMERFFNNEPFDQAEGYVPPEK.

Belongs to the Fe(2+)-trafficking protein family.

Functionally, could be a mediator in iron transactions between iron acquisition and iron-requiring processes, such as synthesis and/or repair of Fe-S clusters in biosynthetic enzymes. The protein is Probable Fe(2+)-trafficking protein of Marinobacter nauticus (strain ATCC 700491 / DSM 11845 / VT8) (Marinobacter aquaeolei).